A 243-amino-acid polypeptide reads, in one-letter code: uncharacterized protein (243 aa).

2 stretches are compositionally biased toward basic and acidic residues: residues M1–E11 and R167–R178. Disordered regions lie at residues M1–R26 and E146–F243. Residues S185–E200 show a composition bias toward low complexity.

This is an uncharacterized protein from Canis lupus familiaris (Dog).